Reading from the N-terminus, the 132-residue chain is NADPH-dependent 7-cyano-7-deazaguanine reductase (132 aa).

Cys43 functions as the Thioimide intermediate in the catalytic mechanism. Asp50 acts as the Proton donor in catalysis. Substrate is bound by residues 65–67 (VEL) and 84–85 (HE).

This sequence belongs to the GTP cyclohydrolase I family. QueF type 1 subfamily.

The protein localises to the cytoplasm. It carries out the reaction 7-aminomethyl-7-carbaguanine + 2 NADP(+) = 7-cyano-7-deazaguanine + 2 NADPH + 3 H(+). It participates in tRNA modification; tRNA-queuosine biosynthesis. Catalyzes the NADPH-dependent reduction of 7-cyano-7-deazaguanine (preQ0) to 7-aminomethyl-7-deazaguanine (preQ1). The chain is NADPH-dependent 7-cyano-7-deazaguanine reductase from Thermosynechococcus vestitus (strain NIES-2133 / IAM M-273 / BP-1).